A 332-amino-acid chain; its full sequence is Biotin synthase (332 aa).

One can recognise a Radical SAM core domain in the interval Tyr-53–Arg-282. 3 residues coordinate [4Fe-4S] cluster: Cys-71, Cys-75, and Cys-78. Cys-115, Cys-147, Cys-207, and Arg-277 together coordinate [2Fe-2S] cluster.

It belongs to the radical SAM superfamily. Biotin synthase family. As to quaternary structure, homodimer. The cofactor is [4Fe-4S] cluster. Requires [2Fe-2S] cluster as cofactor.

It catalyses the reaction (4R,5S)-dethiobiotin + (sulfur carrier)-SH + 2 reduced [2Fe-2S]-[ferredoxin] + 2 S-adenosyl-L-methionine = (sulfur carrier)-H + biotin + 2 5'-deoxyadenosine + 2 L-methionine + 2 oxidized [2Fe-2S]-[ferredoxin]. The protein operates within cofactor biosynthesis; biotin biosynthesis; biotin from 7,8-diaminononanoate: step 2/2. Its function is as follows. Catalyzes the conversion of dethiobiotin (DTB) to biotin by the insertion of a sulfur atom into dethiobiotin via a radical-based mechanism. The polypeptide is Biotin synthase (Bacillus thuringiensis (strain Al Hakam)).